A 183-amino-acid polypeptide reads, in one-letter code: Pyruvoyl-dependent arginine decarboxylase (183 aa).

Residue Ser44 is modified to Pyruvic acid (Ser).

Belongs to the PdaD family. Requires pyruvate as cofactor.

It carries out the reaction L-arginine + H(+) = agmatine + CO2. The protein is Pyruvoyl-dependent arginine decarboxylase of Nitrosopumilus maritimus (strain SCM1).